Here is a 233-residue protein sequence, read N- to C-terminus: Protein-L-isoaspartate O-methyltransferase (233 aa).

Residue S83 is part of the active site.

The protein belongs to the methyltransferase superfamily. L-isoaspartyl/D-aspartyl protein methyltransferase family.

It localises to the cytoplasm. The enzyme catalyses [protein]-L-isoaspartate + S-adenosyl-L-methionine = [protein]-L-isoaspartate alpha-methyl ester + S-adenosyl-L-homocysteine. Functionally, catalyzes the methyl esterification of L-isoaspartyl residues in peptides and proteins that result from spontaneous decomposition of normal L-aspartyl and L-asparaginyl residues. It plays a role in the repair and/or degradation of damaged proteins. This is Protein-L-isoaspartate O-methyltransferase from Opitutus terrae (strain DSM 11246 / JCM 15787 / PB90-1).